The primary structure comprises 389 residues: Mesotocin receptor (389 aa).

The Extracellular portion of the chain corresponds to 1-50 (MEGLCLNLDCSELPNSSWVNSSMENQNHSSNSTRDPLKRNEEVAKVEVTV). 4 N-linked (GlcNAc...) asparagine glycosylation sites follow: N15, N20, N27, and N31. The chain crosses the membrane as a helical span at residues 51–71 (LALILFLALAGNICVLLGIYI). The Cytoplasmic portion of the chain corresponds to 72–87 (NRHKHSRMYFFMKHLS). The chain crosses the membrane as a helical span at residues 88 to 108 (IADLVVAIFQVLPQLIWDITF). Residues 109 to 119 (RFYAPDLVCRL) are Extracellular-facing. C117 and C192 are disulfide-bonded. Residues 120–140 (VTYLQVVGMFASTYMLLLMSL) form a helical membrane-spanning segment. The Cytoplasmic portion of the chain corresponds to 141-159 (DRCLAICQPLRSLHRRSDC). The helical transmembrane segment at 160 to 180 (VYVLFTWILSFLLSTPQTVIF) threads the bilayer. At 181–207 (SLTEVGNGVYDCRADFIQPWGPKAYIT) the chain is on the extracellular side. Residues 208-228 (WITLAVYIIPVMILSVCYGLI) form a helical membrane-spanning segment. Residues 229 to 275 (SYKIWQNIRLKTVCESNLRLSTSRRATLSRVSSVRLISKAKIRTVKM) are Cytoplasmic-facing. A helical membrane pass occupies residues 276 to 296 (TFIIVLAYIVCWTPFFFVQMW). Residues 297 to 308 (SVWDPNPPKEAS) are Extracellular-facing. A helical transmembrane segment spans residues 309-329 (LFIIAMLLGSLNSCCNPWIYM). The Cytoplasmic segment spans residues 330–389 (LFTGHLFHDLLQSFLCCSARYLKTQQQGSDLSASRKSNSSTFVLSRKSSSQKSITQPSTA). The tract at residues 360-389 (LSASRKSNSSTFVLSRKSSSQKSITQPSTA) is disordered.

It belongs to the G-protein coupled receptor 1 family. Vasopressin/oxytocin receptor subfamily. As to expression, highly expressed in the bladder. Also expressed in kidney, brain and skeletal muscle.

The protein resides in the cell membrane. Functionally, binds to mesotocin and may play a role in the regulation of water and salt transport. The chain is Mesotocin receptor from Rhinella marina (Cane toad).